The chain runs to 141 residues: Nucleoside diphosphate kinase (141 aa).

Positions 11, 59, 87, 93, 104, and 114 each coordinate ATP. The active-site Pros-phosphohistidine intermediate is the His-117.

It belongs to the NDK family. Homotetramer. It depends on Mg(2+) as a cofactor.

It is found in the cytoplasm. It catalyses the reaction a 2'-deoxyribonucleoside 5'-diphosphate + ATP = a 2'-deoxyribonucleoside 5'-triphosphate + ADP. The enzyme catalyses a ribonucleoside 5'-diphosphate + ATP = a ribonucleoside 5'-triphosphate + ADP. Functionally, major role in the synthesis of nucleoside triphosphates other than ATP. The ATP gamma phosphate is transferred to the NDP beta phosphate via a ping-pong mechanism, using a phosphorylated active-site intermediate. The polypeptide is Nucleoside diphosphate kinase (Histophilus somni (strain 2336) (Haemophilus somnus)).